We begin with the raw amino-acid sequence, 467 residues long: Light-independent protochlorophyllide reductase subunit N (467 aa).

[4Fe-4S] cluster-binding residues include cysteine 22, cysteine 47, and cysteine 107.

It belongs to the BchN/ChlN family. As to quaternary structure, protochlorophyllide reductase is composed of three subunits; ChlL, ChlN and ChlB. Forms a heterotetramer of two ChlB and two ChlN subunits. Requires [4Fe-4S] cluster as cofactor.

It localises to the plastid. The protein resides in the chloroplast. The enzyme catalyses chlorophyllide a + oxidized 2[4Fe-4S]-[ferredoxin] + 2 ADP + 2 phosphate = protochlorophyllide a + reduced 2[4Fe-4S]-[ferredoxin] + 2 ATP + 2 H2O. The protein operates within porphyrin-containing compound metabolism; chlorophyll biosynthesis (light-independent). In terms of biological role, component of the dark-operative protochlorophyllide reductase (DPOR) that uses Mg-ATP and reduced ferredoxin to reduce ring D of protochlorophyllide (Pchlide) to form chlorophyllide a (Chlide). This reaction is light-independent. The NB-protein (ChlN-ChlB) is the catalytic component of the complex. This chain is Light-independent protochlorophyllide reductase subunit N, found in Pinus thunbergii (Japanese black pine).